A 319-amino-acid polypeptide reads, in one-letter code: Lipooligosaccharide heptosyltransferase 2 (319 aa).

The protein belongs to the glycosyltransferase 9 family.

The enzyme catalyses an L-alpha-D-Hep-(1-&gt;5)-[alpha-Kdo-(2-&gt;4)]-alpha-Kdo-(2-&gt;6)-lipid A + ADP-L-glycero-beta-D-manno-heptose = an L-alpha-D-Hep-(1-&gt;3)-L-alpha-D-Hep-(1-&gt;5)-[alpha-Kdo-(2-&gt;4)]-alpha-Kdo-(2-&gt;6)-lipid A + ADP + H(+). It participates in bacterial outer membrane biogenesis; LOS core biosynthesis. Its function is as follows. Glycosyltransferase involved in the biosynthesis of the core oligosaccharide region of lipooligosaccharide (LOS). Catalyzes the addition of the second heptose unit to the heptosyl-Kdo2-lipid A module. The protein is Lipooligosaccharide heptosyltransferase 2 of Campylobacter jejuni subsp. jejuni serotype O:2 (strain ATCC 700819 / NCTC 11168).